The primary structure comprises 802 residues: Outer membrane usher protein CssD (802 aa).

It belongs to the fimbrial export usher family.

It localises to the cell outer membrane. Functionally, involved in the export and assembly of C6 fimbrial subunits across the outer membrane. This is Outer membrane usher protein CssD (cssD) from Escherichia coli.